Here is a 123-residue protein sequence, read N- to C-terminus: UPF0342 protein LAR_1202 (123 aa).

It belongs to the UPF0342 family.

This is UPF0342 protein LAR_1202 from Limosilactobacillus reuteri subsp. reuteri (strain JCM 1112) (Lactobacillus reuteri).